We begin with the raw amino-acid sequence, 62 residues long: Large ribosomal subunit protein uL29 (62 aa).

The protein belongs to the universal ribosomal protein uL29 family.

This is Large ribosomal subunit protein uL29 from Trichlorobacter lovleyi (strain ATCC BAA-1151 / DSM 17278 / SZ) (Geobacter lovleyi).